The following is a 264-amino-acid chain: Phosphoinositide-3-kinase-interacting protein 1 (264 aa).

The signal sequence occupies residues 1–21 (MLLAWVHTFLLSNMLLAEAYG). The Extracellular portion of the chain corresponds to 22–170 (SGGCFWDNGH…SKEKKDLGTL (149 aa)). The Kringle domain maps to 24 to 101 (GCFWDNGHLY…EKRPCEDVSC (78 aa)). 3 disulfide bridges follow: Cys25-Cys101, Cys46-Cys82, and Cys70-Cys96. Positions 94-129 (RPCEDVSCPETTSQAPPPSSAMELEEKSGAPGDKEA) are disordered. Residues 117–129 (LEEKSGAPGDKEA) show a composition bias toward basic and acidic residues. The chain crosses the membrane as a helical span at residues 171–191 (GYVLGITMMVIILAIGAGIIV). At 192–264 (GYTYKRGKDL…LTGQAGTPGA (73 aa)) the chain is on the cytoplasmic side.

Its subcellular location is the cell membrane. Functionally, negative regulator of hepatic phosphatidylinositol 3-kinase (PI3K) activity. This chain is Phosphoinositide-3-kinase-interacting protein 1 (Pik3ip1), found in Mus musculus (Mouse).